The primary structure comprises 95 residues: DNA-directed RNA polymerase subunit Rpo11 (95 aa).

It belongs to the archaeal Rpo11/eukaryotic RPB11/RPC19 RNA polymerase subunit family. Part of the RNA polymerase complex.

Its subcellular location is the cytoplasm. The catalysed reaction is RNA(n) + a ribonucleoside 5'-triphosphate = RNA(n+1) + diphosphate. Functionally, DNA-dependent RNA polymerase (RNAP) catalyzes the transcription of DNA into RNA using the four ribonucleoside triphosphates as substrates. The sequence is that of DNA-directed RNA polymerase subunit Rpo11 from Pyrococcus horikoshii (strain ATCC 700860 / DSM 12428 / JCM 9974 / NBRC 100139 / OT-3).